Reading from the N-terminus, the 210-residue chain is MADS-box protein AGL42 (210 aa).

Residues 1–61 form the MADS-box domain; sequence MVRGKIEMKK…GRLYEFSSSD (61 aa). In terms of domain architecture, K-box spans 87-177; sequence LQQLKQEASH…HQKNVINPWR (91 aa).

Expressed in quiescent center (QC) cells of root tips. Expressed at the base of the petiole of cotyledons and leaves, in flower buds, petals, sepals and abscission zone of flowers and siliques.

The protein resides in the nucleus. In terms of biological role, MADS-box transcription factor that acts with AGL71 and AGL72 in the control of flowering time. Promotes flowering at the shoot apical and axillary meristems. Seems to act through a gibberellin-dependent pathway. Interacts genetically with SOC1 and its expression is directly regulated by SOC1. Plays a role in controlling flower organ senescence and abscission by repressing ethylene responses and regulating the expression of BOP2 and IDA. This Arabidopsis thaliana (Mouse-ear cress) protein is MADS-box protein AGL42 (AGL42).